The sequence spans 338 residues: Nicotinate-nucleotide--dimethylbenzimidazole phosphoribosyltransferase (338 aa).

Glu305 (proton acceptor) is an active-site residue.

The protein belongs to the CobT family.

It carries out the reaction 5,6-dimethylbenzimidazole + nicotinate beta-D-ribonucleotide = alpha-ribazole 5'-phosphate + nicotinate + H(+). It participates in nucleoside biosynthesis; alpha-ribazole biosynthesis; alpha-ribazole from 5,6-dimethylbenzimidazole: step 1/2. Functionally, catalyzes the synthesis of alpha-ribazole-5'-phosphate from nicotinate mononucleotide (NAMN) and 5,6-dimethylbenzimidazole (DMB). The protein is Nicotinate-nucleotide--dimethylbenzimidazole phosphoribosyltransferase of Novosphingobium aromaticivorans (strain ATCC 700278 / DSM 12444 / CCUG 56034 / CIP 105152 / NBRC 16084 / F199).